We begin with the raw amino-acid sequence, 488 residues long: Glutamate--tRNA ligase (488 aa).

The short motif at 9-19 (PSPTGFLHIGG) is the 'HIGH' region element. Zn(2+) contacts are provided by cysteine 112, cysteine 114, cysteine 139, and histidine 141. The 'KMSKS' region signature appears at 256-260 (KLSKR). Lysine 259 serves as a coordination point for ATP.

This sequence belongs to the class-I aminoacyl-tRNA synthetase family. Glutamate--tRNA ligase type 1 subfamily. As to quaternary structure, monomer. Requires Zn(2+) as cofactor.

Its subcellular location is the cytoplasm. It carries out the reaction tRNA(Glu) + L-glutamate + ATP = L-glutamyl-tRNA(Glu) + AMP + diphosphate. Catalyzes the attachment of glutamate to tRNA(Glu) in a two-step reaction: glutamate is first activated by ATP to form Glu-AMP and then transferred to the acceptor end of tRNA(Glu). The polypeptide is Glutamate--tRNA ligase (Elusimicrobium minutum (strain Pei191)).